The chain runs to 105 residues: MTTVSSDRIRIKLKAYDYRILDKAVAEIVDTARNTGAGVAGPIPLPTNIHKYTIQRSVHVDKKSREQFEMRIHKRLMDILEPTQQTVDALGKLSLPAGVDVEIKL.

This sequence belongs to the universal ribosomal protein uS10 family. In terms of assembly, part of the 30S ribosomal subunit.

Its function is as follows. Involved in the binding of tRNA to the ribosomes. In Desulfovibrio desulfuricans (strain ATCC 27774 / DSM 6949 / MB), this protein is Small ribosomal subunit protein uS10.